The following is a 1295-amino-acid chain: Phosphoribosylformylglycinamidine synthase (1295 aa).

The segment at 305–327 (WPGAATGSGGEIRDEGATGRGAK) is disordered. Residues 307-318 (GAATGSGGEIRD), 386-388 (TGY), and A678 contribute to the ATP site. 4 residues coordinate Mg(2+): D679, E718, N722, and D884. Position 886 (S886) interacts with ATP. In terms of domain architecture, Glutamine amidotransferase type-1 spans 1042-1295 (VAVLREQGVN…IFRNARKQLG (254 aa)). C1135 acts as the Nucleophile in catalysis. Residues H1260 and E1262 contribute to the active site.

It in the N-terminal section; belongs to the FGAMS family. As to quaternary structure, monomer.

Its subcellular location is the cytoplasm. The enzyme catalyses N(2)-formyl-N(1)-(5-phospho-beta-D-ribosyl)glycinamide + L-glutamine + ATP + H2O = 2-formamido-N(1)-(5-O-phospho-beta-D-ribosyl)acetamidine + L-glutamate + ADP + phosphate + H(+). Its pathway is purine metabolism; IMP biosynthesis via de novo pathway; 5-amino-1-(5-phospho-D-ribosyl)imidazole from N(2)-formyl-N(1)-(5-phospho-D-ribosyl)glycinamide: step 1/2. In terms of biological role, phosphoribosylformylglycinamidine synthase involved in the purines biosynthetic pathway. Catalyzes the ATP-dependent conversion of formylglycinamide ribonucleotide (FGAR) and glutamine to yield formylglycinamidine ribonucleotide (FGAM) and glutamate. In Salmonella typhi, this protein is Phosphoribosylformylglycinamidine synthase.